Reading from the N-terminus, the 466-residue chain is Alpha-1A adrenergic receptor (466 aa).

Residues 1–27 are Extracellular-facing; that stretch reads MVFLSGNASDSSNCTQPPAPVNISKAI. Residues Asn-7, Asn-13, and Asn-22 are each glycosylated (N-linked (GlcNAc...) asparagine). A helical membrane pass occupies residues 28 to 51; that stretch reads LLGVILGGLILFGVLGNILVILSV. Topologically, residues 52-64 are cytoplasmic; it reads ACHRHLHSVTHYY. Residues 65-88 traverse the membrane as a helical segment; the sequence is IVNLAVADLLLTSTVLPFSAIFEV. The Extracellular portion of the chain corresponds to 89–99; it reads LGYWAFGRVFC. Residues Cys-99 and Cys-176 are joined by a disulfide bond. A helical transmembrane segment spans residues 100 to 122; sequence NIWAAVDVLCCTASIMGLCIISI. The Cytoplasmic portion of the chain corresponds to 123-143; sequence DRYIGVSYPLRYPTIVTQRRG. The helical transmembrane segment at 144–167 threads the bilayer; sequence LMALLCVWALSLVISIGPLFGWRQ. Residues 168 to 181 are Extracellular-facing; that stretch reads PAPEDETICQINEE. The helical transmembrane segment at 182 to 205 threads the bilayer; that stretch reads PGYVLFSALGSFYLPLAIILVMYC. Topologically, residues 206-273 are cytoplasmic; the sequence is RVYVVAKRES…FSREKKAAKT (68 aa). Residue Ser-215 is modified to Phosphoserine; by PKA. Residues 274–297 form a helical membrane-spanning segment; sequence LGIVVGCFVLCWLPFFLVMPIGSF. Topologically, residues 298-305 are extracellular; that stretch reads FPDFKPSE. The chain crosses the membrane as a helical span at residues 306 to 329; sequence TVFKIVFWLGYLNSCINPIIYPCS. The Cytoplasmic portion of the chain corresponds to 330–466; that stretch reads SQEFKKAFQN…ISLSENGEEV (137 aa). The short motif at 334-349 is the Nuclear localization signal element; sequence KKAFQNVLRIQCLCRK. Cys-345 carries the S-palmitoyl cysteine lipid modification.

This sequence belongs to the G-protein coupled receptor 1 family. Adrenergic receptor subfamily. ADRA1A sub-subfamily. In terms of assembly, homo- and heterooligomer. Heterooligomerizes with ADRA1B homooligomers in cardiac myocytes. Interacts with CAVIN4. In terms of processing, C-terminal Ser or Thr residues may be phosphorylated. Expressed in heart, brain, liver and prostate, but not in kidney, lung, adrenal, aorta and pituitary. Within the prostate, expressed in the apex, base, periurethral and lateral lobe. Isoform 4 is the most abundant isoform expressed in the prostate with high levels also detected in liver and heart.

The protein localises to the nucleus membrane. It is found in the cell membrane. The protein resides in the cytoplasm. It localises to the membrane. Its subcellular location is the caveola. Functionally, this alpha-adrenergic receptor mediates its action by association with G proteins that activate a phosphatidylinositol-calcium second messenger system. Its effect is mediated by G(q) and G(11) proteins. Nuclear ADRA1A-ADRA1B heterooligomers regulate phenylephrine(PE)-stimulated ERK signaling in cardiac myocytes. This chain is Alpha-1A adrenergic receptor (ADRA1A), found in Homo sapiens (Human).